Here is a 200-residue protein sequence, read N- to C-terminus: 3-isopropylmalate dehydratase small subunit (200 aa).

Belongs to the LeuD family. LeuD type 1 subfamily. In terms of assembly, heterodimer of LeuC and LeuD.

It catalyses the reaction (2R,3S)-3-isopropylmalate = (2S)-2-isopropylmalate. Its pathway is amino-acid biosynthesis; L-leucine biosynthesis; L-leucine from 3-methyl-2-oxobutanoate: step 2/4. Catalyzes the isomerization between 2-isopropylmalate and 3-isopropylmalate, via the formation of 2-isopropylmaleate. The sequence is that of 3-isopropylmalate dehydratase small subunit from Proteus mirabilis (strain HI4320).